A 217-amino-acid polypeptide reads, in one-letter code: tRNA (guanine-N(7)-)-methyltransferase (217 aa).

S-adenosyl-L-methionine-binding residues include Glu46, Glu71, Asp98, and Asp120. Residue Asp120 is part of the active site. A substrate-binding site is contributed by Lys124. The segment at 126–131 (RHEKRR) is interaction with RNA. Substrate-binding positions include Asp156 and 196–199 (TEYE).

The protein belongs to the class I-like SAM-binding methyltransferase superfamily. TrmB family.

The enzyme catalyses guanosine(46) in tRNA + S-adenosyl-L-methionine = N(7)-methylguanosine(46) in tRNA + S-adenosyl-L-homocysteine. Its pathway is tRNA modification; N(7)-methylguanine-tRNA biosynthesis. Functionally, catalyzes the formation of N(7)-methylguanine at position 46 (m7G46) in tRNA. The polypeptide is tRNA (guanine-N(7)-)-methyltransferase (Lactobacillus gasseri (strain ATCC 33323 / DSM 20243 / BCRC 14619 / CIP 102991 / JCM 1131 / KCTC 3163 / NCIMB 11718 / NCTC 13722 / AM63)).